A 395-amino-acid chain; its full sequence is Cyclic AMP-responsive element-binding protein 3-like protein 4 (395 aa).

Residues 1–295 are Cytoplasmic-facing; it reads MDLGIPDLLD…QTSNKAAQTS (295 aa). Residues 82 to 108 form a disordered region; that stretch reads EASPGSDSGISEDPCHPDSPPAPRATS. The 64-residue stretch at 217–280 folds into the bZIP domain; that stretch reads VLKKVRRKIR…ISLVAQLRQL (64 aa). A basic motif region spans residues 219–248; that stretch reads KKVRRKIRNKQSAQDSRRRKKEYIDGLESR. A leucine-zipper region spans residues 259-280; the sequence is LQKKVQELERHNISLVAQLRQL. A helical; Signal-anchor for type II membrane protein membrane pass occupies residues 296-316; that stretch reads TCVLILLFSLALIILPSFSPF. Topologically, residues 317–395 are lumenal; the sequence is QSRPEAGSED…IRSVLHADEM (79 aa). The interval 355–395 is disordered; the sequence is RLREPPGAKDANGSTRTLLEKMGGKPRPSGRIRSVLHADEM. Residue asparagine 366 is glycosylated (N-linked (GlcNAc...) asparagine).

Belongs to the bZIP family. ATF subfamily. Binds DNA as a dimer. In terms of processing, N-glycosylated in the C-terminal region. Post-translationally, controlled by regulated intramembrane proteolysis (RIP). Following ER stress a fragment containing the cytoplasmic transcription factor domain is released by proteolysis. The cleavage seems to be performed sequentially by site-1 and site-2 proteases (PS1 and PS2). PS1 cleavage may be suppressed by a determinant in the C-terminal region. According to PubMed:11830526, exclusively expressed in the prostate. Expressed in breast and prostate cancer cell lines. Expressed in prostatic luminal epithelial cells (at protein level). Expression is significantly more abundant in prostate cancer than in benign prostatic tissue (prostatic hyperplasia). According to PubMed:12111373, also expressed in brain, pancreas and skeletal muscle, and at lower levels in small intestine, testis, leukocyte and thymus.

It localises to the endoplasmic reticulum membrane. The protein resides in the golgi apparatus membrane. The protein localises to the nucleus. Its function is as follows. Transcriptional activator that may play a role in the unfolded protein response. Binds to the UPR element (UPRE) but not to CRE element. Preferentially binds DNA with to the consensus sequence 5'-T[GT]ACGT[GA][GT]-3' and has transcriptional activation activity from UPRE. Binds to NF-kappa-B site and has transcriptional activation activity from NF-kappa-B-containing regulatory elements. This is Cyclic AMP-responsive element-binding protein 3-like protein 4 (CREB3L4) from Homo sapiens (Human).